Reading from the N-terminus, the 630-residue chain is DNA topoisomerase 4 subunit B (630 aa).

ATP contacts are provided by residues tyrosine 5, asparagine 42, aspartate 69, glycine 110 to isoleucine 116, and lysine 334. Positions threonine 412–proline 525 constitute a Toprim domain. Mg(2+)-binding residues include glutamate 418, aspartate 490, and aspartate 492.

It belongs to the type II topoisomerase family. ParE type 1 subfamily. Heterotetramer composed of ParC and ParE. Mg(2+) is required as a cofactor. Requires Mn(2+) as cofactor. The cofactor is Ca(2+).

The catalysed reaction is ATP-dependent breakage, passage and rejoining of double-stranded DNA.. With respect to regulation, pyrrolopyrimidines inhibit both GyrB and its paralog in topoisomerase IV (parE). Functionally, topoisomerase IV is essential for chromosome segregation; it is the principal protein responsible for decatenating newly replicated chromosomes. It relaxes supercoiled DNA. MukB stimulates the relaxation activity of topoisomerase IV and also has a modest effect on decatenation. The polypeptide is DNA topoisomerase 4 subunit B (Escherichia coli (strain K12)).